Here is a 364-residue protein sequence, read N- to C-terminus: MSYQIAVLAGDGIGPEVMAEARKVLKAVEARFGLNIEYTEYDVGGIAIDNHGCPLPEATLKGCEAADAILFGSVGGPKWEKLPPNEQPERGALLPLRGHFELFCNLRPAKLHDGLEHMSPLRSDISARGFDVLCVRELTGGIYFGKPKGRQGEGESEEAFDTMRYSRREISRIARIAFEAARGRRKKVTSVDKANVLACSVLWRQVVEEVAVDFPDVELEHIYIDNATMQLLRRPDEFDVMLCSNLFGDILSDEIAMLTGSMGLLSSASMNSTGFGLFEPAGGSAPDIAGKGIANPIAQILSAALMLRHSLKQEEAASAIERAVTKALNSGYLTGELLSSDQRHKAKTTVQMGDFIADAVKAGV.

Position 76–89 (76–89 (GPKWEKLPPNEQPE)) interacts with NAD(+). Substrate contacts are provided by arginine 97, arginine 107, arginine 136, and aspartate 225. Aspartate 225, aspartate 249, and aspartate 253 together coordinate Mg(2+). 283 to 295 (GSAPDIAGKGIAN) is an NAD(+) binding site.

It belongs to the isocitrate and isopropylmalate dehydrogenases family. LeuB type 1 subfamily. In terms of assembly, homodimer. Mg(2+) serves as cofactor. Requires Mn(2+) as cofactor.

It localises to the cytoplasm. The enzyme catalyses (2R,3S)-3-isopropylmalate + NAD(+) = 4-methyl-2-oxopentanoate + CO2 + NADH. It participates in amino-acid biosynthesis; L-leucine biosynthesis; L-leucine from 3-methyl-2-oxobutanoate: step 3/4. Functionally, catalyzes the oxidation of 3-carboxy-2-hydroxy-4-methylpentanoate (3-isopropylmalate) to 3-carboxy-4-methyl-2-oxopentanoate. The product decarboxylates to 4-methyl-2 oxopentanoate. The chain is 3-isopropylmalate dehydrogenase from Shewanella oneidensis (strain ATCC 700550 / JCM 31522 / CIP 106686 / LMG 19005 / NCIMB 14063 / MR-1).